Consider the following 392-residue polypeptide: MILPTIVHLDADAFFVSCELALKPELRGTKCAVGGRERGIISSASYEARACGVYTPMPTTRALKVCPDLIMLPHTGGLYSRVSRQMFELCETLTPLVQRNSIDEGYLDLGPCGFKTSAEIEQAVHGLQHKIEQQLQITASFGLAVNKLVAQIASKLRKPKGFVVVPSGTEAEFLAPLPIGKLPGVGPKTEERLVGRHGIKLVRDLLARGEAELEAIFGDGWREMRDGALGIDDRPVETEHEDAKSYSQQETFDEDIASFAEIERVVKRMIDELLPKIREDGKRVRTMTVKVRYPDFSQESHGRSLSAGTDLEAPFYPLVTPLLRQAWTKKRPLRLVSVRFSGVEDTPVQLEMFAQNEEKRRRLAAVLDHLNRRGGDAVVQHGHQLAKRPPPR.

One can recognise a UmuC domain in the interval 6 to 186; sequence IVHLDADAFF…LPIGKLPGVG (181 aa). Residues aspartate 10 and aspartate 103 each coordinate Mg(2+). Residue glutamate 104 is part of the active site.

This sequence belongs to the DNA polymerase type-Y family. As to quaternary structure, monomer. It depends on Mg(2+) as a cofactor.

The protein localises to the cytoplasm. It catalyses the reaction DNA(n) + a 2'-deoxyribonucleoside 5'-triphosphate = DNA(n+1) + diphosphate. Functionally, poorly processive, error-prone DNA polymerase involved in untargeted mutagenesis. Copies undamaged DNA at stalled replication forks, which arise in vivo from mismatched or misaligned primer ends. These misaligned primers can be extended by PolIV. Exhibits no 3'-5' exonuclease (proofreading) activity. May be involved in translesional synthesis, in conjunction with the beta clamp from PolIII. This chain is DNA polymerase IV, found in Opitutus terrae (strain DSM 11246 / JCM 15787 / PB90-1).